The chain runs to 303 residues: uncharacterized protein (303 aa).

The protein localises to the cytoplasm. This is an uncharacterized protein from Saccharomyces cerevisiae (strain ATCC 204508 / S288c) (Baker's yeast).